The sequence spans 319 residues: ATP-dependent 6-phosphofructokinase (319 aa).

G11 lines the ATP pocket. 21 to 25 (RAVVR) lines the ADP pocket. ATP is bound by residues 72 to 73 (RC) and 102 to 105 (GEGS). E103 lines the Mg(2+) pocket. 126 to 128 (TID) contributes to the substrate binding site. The Proton acceptor role is filled by D128. K155 provides a ligand contact to ADP. Residues R163 and 170 to 172 (MGR) contribute to the substrate site. ADP contacts are provided by residues 186–188 (GAE), R212, and 214–216 (KIN). Substrate contacts are provided by residues E223, R244, and 250 to 253 (HVQR).

This sequence belongs to the phosphofructokinase type A (PFKA) family. ATP-dependent PFK group I subfamily. Prokaryotic clade 'B1' sub-subfamily. As to quaternary structure, homotetramer. It depends on Mg(2+) as a cofactor.

Its subcellular location is the cytoplasm. It carries out the reaction beta-D-fructose 6-phosphate + ATP = beta-D-fructose 1,6-bisphosphate + ADP + H(+). It functions in the pathway carbohydrate degradation; glycolysis; D-glyceraldehyde 3-phosphate and glycerone phosphate from D-glucose: step 3/4. Allosterically activated by ADP and other diphosphonucleosides, and allosterically inhibited by phosphoenolpyruvate. Its function is as follows. Catalyzes the phosphorylation of D-fructose 6-phosphate to fructose 1,6-bisphosphate by ATP, the first committing step of glycolysis. The polypeptide is ATP-dependent 6-phosphofructokinase (Thermotoga neapolitana (strain ATCC 49049 / DSM 4359 / NBRC 107923 / NS-E)).